A 951-amino-acid polypeptide reads, in one-letter code: Ethylene-overproduction protein 1 (951 aa).

The segment at 15-52 is disordered; it reads VYALNPSAPTPPPPPGNSSTGGGGGGGSGGGTGGVGDK. Positions 33 to 50 are enriched in gly residues; sequence STGGGGGGGSGGGTGGVG. Positions 242–342 constitute a BTB domain; the sequence is YDMSFCIGDE…ACDSHLAHLV (101 aa). TPR repeat units follow at residues 443-476, 539-572, 573-605, 698-731, 772-805, 807-837, 868-901, and 903-934; these read QLAY…GHLY, TFPY…KASP, DCLE…EPNF, HERL…QRSF, GQAL…KHTR, HQGL…AQNN, TYPY…KPDL, and LLHL…DPGH. A coiled-coil region spans residues 815–854; it reads HLKNQRKAAYDEMTKLIEKAQNNASAYEKRSEYCDREMAQ.

This sequence belongs to the ETO1 family. Interacts with the C-terminal domain of ACS4, ACS5 and ACS9. Interacts with CUL3A. Putative component of a ubiquitin ligase complex containing CUL3. In terms of tissue distribution, predominantly expressed in flowers.

Its pathway is protein modification; protein ubiquitination. Its function is as follows. Essential regulator of the ethylene pathway, which acts by regulating the stability of 1-aminocyclopropane-1-carboxylate synthase (ACS) enzymes. May act as a substrate-specific adapter that connects ACS enzymes, such as ACS5, to ubiquitin ligase complexes, leading to proteasomal degradation of ACS enzymes. The protein is Ethylene-overproduction protein 1 (ETO1) of Arabidopsis thaliana (Mouse-ear cress).